The sequence spans 620 residues: LysM domain receptor-like kinase 3 (620 aa).

A signal peptide spans 1–23 (MNLKNGLLLFILFLDCVFFKVES). The Extracellular portion of the chain corresponds to 24-231 (KCVKGCDVAL…YSRTGIAKGS (208 aa)). Disulfide bonds link cysteine 25/cysteine 92, cysteine 29/cysteine 154, and cysteine 90/cysteine 152. N-linked (GlcNAc...) asparagine glycosylation is present at asparagine 46. Residues 46-72 (NISNFMQSKIVLTNSFDVIMSYNRDVV) enclose the LysM 1; degenerate domain. LysM domains follow at residues 102 to 148 (FEYT…KINV) and 167 to 210 (VTYP…VFIP). Residues 108–114 (EGDDYDL) and 136–142 (DPNHIPV) each bind chitin. N-linked (GlcNAc...) asparagine glycans are attached at residues asparagine 147 and asparagine 199. Residues 232 to 252 (AVGIAMAGIFGLLLFVIYIYA) form a helical membrane-spanning segment. Topologically, residues 253 to 620 (KYFQKKEEEK…QSLINLLSTR (368 aa)) are cytoplasmic. Positions 265–278 (LPQTSRAFSTQDAS) are enriched in polar residues. A disordered region spans residues 265–292 (LPQTSRAFSTQDASGSAEYETSGSSGHA). 2 positions are modified to phosphoserine: serine 269 and serine 273. The region spanning 322–595 (FSLDNKIGQG…RSIVVALMTL (274 aa)) is the Protein kinase domain. Residues 328–336 (IGQGGFGAV) and lysine 349 each bind ATP. Aspartate 441 (proton acceptor) is an active-site residue.

It belongs to the protein kinase superfamily. Ser/Thr protein kinase family. As to quaternary structure, forms homodimers and homooligomers. Forms heteromeric complexes with NFP at the cell periphery in nodules. Interacts with PUB1. In terms of processing, autophosphorylated. In terms of tissue distribution, expressed in the epidermal and root hair cells of the developing root hair zone during nonsymbiotic growth. Accumulates in roots and nodules during symbiotic growth with rhizobia. Localized at the cell periphery in a narrow zone of about two cell layers (e.g. L1/L2 zone) at the nodule apex upon infection by rhizobia, from the meristem to the infection zone (at protein level).

It localises to the cell membrane. It is found in the vacuole lumen. The enzyme catalyses L-seryl-[protein] + ATP = O-phospho-L-seryl-[protein] + ADP + H(+). It carries out the reaction L-threonyl-[protein] + ATP = O-phospho-L-threonyl-[protein] + ADP + H(+). In terms of biological role, putative receptor for S.meliloti Nod factor signals essential for the establishment of the nitrogen-fixing, root nodule symbiosis with S.meliloti. Involved in the control of root hair curling after S.meliloti infection, probably by modulating the reorganization of the microtubular cytoskeleton in epidermal and cortical cells. Regulates a subset of Nod factor-induced genes. This is LysM domain receptor-like kinase 3 from Medicago truncatula (Barrel medic).